The chain runs to 311 residues: Ornithine carbamoyltransferase (311 aa).

Residues 54–58 (STRTR), asparagine 81, arginine 104, and 131–134 (HPCQ) each bind carbamoyl phosphate. L-ornithine is bound by residues asparagine 164, aspartate 225, and 229 to 230 (DM). Residues 268–271 (HDMP), threonine 279, and arginine 297 contribute to the carbamoyl phosphate site.

The protein belongs to the aspartate/ornithine carbamoyltransferase superfamily. OTCase family.

Its subcellular location is the cytoplasm. It catalyses the reaction carbamoyl phosphate + L-ornithine = L-citrulline + phosphate + H(+). The protein operates within amino-acid biosynthesis; L-arginine biosynthesis; L-arginine from L-ornithine and carbamoyl phosphate: step 1/3. Functionally, reversibly catalyzes the transfer of the carbamoyl group from carbamoyl phosphate (CP) to the N(epsilon) atom of ornithine (ORN) to produce L-citrulline. In Leptospira interrogans serogroup Icterohaemorrhagiae serovar copenhageni (strain Fiocruz L1-130), this protein is Ornithine carbamoyltransferase (argF).